Here is a 222-residue protein sequence, read N- to C-terminus: Thymidylate kinase (222 aa).

Position 7-14 (7-14 (GIDGAGKS)) interacts with ATP.

This sequence belongs to the thymidylate kinase family.

It carries out the reaction dTMP + ATP = dTDP + ADP. Its function is as follows. Phosphorylation of dTMP to form dTDP in both de novo and salvage pathways of dTTP synthesis. The protein is Thymidylate kinase of Chlorobium chlorochromatii (strain CaD3).